A 330-amino-acid polypeptide reads, in one-letter code: MSAASAFAMNAPSFVNASSLKKASTSARSGVLSARFTCNSSSSSSSSATPPSLIRNEPVFAAPAPIITPNWTEDGNESYEEAIDALKKTLIEKGELEPVAATRIDQITAQAAAPDTKAPFDPVERIKSGFVKFKTEKFVTNPALYDELAKGQSPKFMVFACSDSRVCPSHVLDFQPGEAFVVRNVANMVPPFDKTKYSGVGAAVEYAVLHLKVQEIFVIGHSRCGGIKGLMTFPDEGPHSTDFIEDWVKVCLPAKSKVVAEHNGTHLDDQCVLCEKEAVNVSLGNLLTYPFVRDGLRNKTLALKGGHYDFVNGTFELWALDFGLSSPTSV.

The tract at residues 1-109 is chloroplast transit peptide-like; sequence MSAASAFAMN…AATRIDQITA (109 aa).

This sequence belongs to the beta-class carbonic anhydrase family.

The protein resides in the cytoplasm. The enzyme catalyses hydrogencarbonate + H(+) = CO2 + H2O. Its function is as follows. Reversible hydration of carbon dioxide. The sequence is that of Carbonic anhydrase from Flaveria bidentis (Coastal plain yellowtops).